A 212-amino-acid chain; its full sequence is Interleukin-6 (212 aa).

The first 29 residues, 1–29, serve as a signal peptide directing secretion; the sequence is MNSFSTSAFGPVAFSLGLLLVLPAAFPAP. 2 cysteine pairs are disulfide-bonded: Cys-72–Cys-78 and Cys-101–Cys-111. N-linked (GlcNAc...) asparagine glycosylation is present at Asn-73. An N-linked (GlcNAc...) asparagine glycan is attached at Asn-172.

Belongs to the IL-6 superfamily. Component of a hexamer of two molecules each of IL6, IL6R and IL6ST; first binds to IL6R to associate with the signaling subunit IL6ST. Interacts with IL6R (via the N-terminal ectodomain); this interaction may be affected by IL6R-binding with SORL1, hence decreasing IL6 cis signaling. Interacts with SORL1 (via the N-terminal ectodomain); this interaction leads to IL6 internalization and lysosomal degradation. May form a trimeric complex with the soluble SORL1 ectodomain and soluble IL6R receptor; this interaction might stabilize circulating IL6, hence promoting IL6 trans signaling.

The protein localises to the secreted. Its function is as follows. Cytokine with a wide variety of biological functions in immunity, tissue regeneration, and metabolism. Binds to IL6R, then the complex associates to the signaling subunit IL6ST/gp130 to trigger the intracellular IL6-signaling pathway. The interaction with the membrane-bound IL6R and IL6ST stimulates 'classic signaling', whereas the binding of IL6 and soluble IL6R to IL6ST stimulates 'trans-signaling'. Alternatively, 'cluster signaling' occurs when membrane-bound IL6:IL6R complexes on transmitter cells activate IL6ST receptors on neighboring receiver cells. IL6 is a potent inducer of the acute phase response. Rapid production of IL6 contributes to host defense during infection and tissue injury, but excessive IL6 synthesis is involved in disease pathology. In the innate immune response, is synthesized by myeloid cells, such as macrophages and dendritic cells, upon recognition of pathogens through toll-like receptors (TLRs) at the site of infection or tissue injury. In the adaptive immune response, is required for the differentiation of B cells into immunoglobulin-secreting cells. Plays a major role in the differentiation of CD4(+) T cell subsets. Essential factor for the development of T follicular helper (Tfh) cells that are required for the induction of germinal-center formation. Required to drive naive CD4(+) T cells to the Th17 lineage. Also required for proliferation of myeloma cells and the survival of plasmablast cells. In terms of biological role, acts as an essential factor in bone homeostasis and on vessels directly or indirectly by induction of VEGF, resulting in increased angiogenesis activity and vascular permeability. Induces, through 'trans-signaling' and synergistically with IL1B and TNF, the production of VEGF. Involved in metabolic controls, is discharged into the bloodstream after muscle contraction increasing lipolysis and improving insulin resistance. 'Trans-signaling' in central nervous system also regulates energy and glucose homeostasis. Mediates, through GLP-1, crosstalk between insulin-sensitive tissues, intestinal L cells and pancreatic islets to adapt to changes in insulin demand. Also acts as a myokine. Plays a protective role during liver injury, being required for maintenance of tissue regeneration. Also has a pivotal role in iron metabolism by regulating HAMP/hepcidin expression upon inflammation or bacterial infection. Through activation of IL6ST-YAP-NOTCH pathway, induces inflammation-induced epithelial regeneration. This chain is Interleukin-6 (IL6), found in Cercocebus atys (Sooty mangabey).